The chain runs to 394 residues: MAKAKFERIKPHVNVGTIGHVDHGKTTLTAAISHVLAKTYGGEAKDFSQIDNAPEERERGITINTSHIEYDTPSRHYAHVDCPGHADYVKNMITGAAQMDGAILVVASTDGPMPQTREHILLSRQVGVPYIIVFMNKCDMVDDEELLELVEMEVRELLSEYDFPGDDLPVIQGSALKALEGQPEWEAKIIELANALDSYIPEPQRDIDKPFLLPIEDVFSISGRGTVVTGRVERGIVKVGDEVEIVGVRTTTKTTCTGVEMFRKLLDEGRAGENCGVLLRGTKRDDVERGQVLAKPGSINPHTTFESEVYVLSKEEGGRHTPFFKGYRPQFYFRTTDVTGTIELPEGVEMVMPGDNIKMVVTLICPIAMDEGLRFAIREGGRTVGAGVVAKIIA.

The tr-type G domain maps to K10–Q204. The interval G19–T26 is G1. GTP is bound at residue G19–T26. A Mg(2+)-binding site is contributed by T26. The segment at G60–N64 is G2. The interval D81 to G84 is G3. Residues D81 to H85 and N136 to D139 each bind GTP. The G4 stretch occupies residues N136 to D139. Residues S174 to L176 form a G5 region.

Belongs to the TRAFAC class translation factor GTPase superfamily. Classic translation factor GTPase family. EF-Tu/EF-1A subfamily. As to quaternary structure, monomer.

It localises to the cytoplasm. The catalysed reaction is GTP + H2O = GDP + phosphate + H(+). In terms of biological role, GTP hydrolase that promotes the GTP-dependent binding of aminoacyl-tRNA to the A-site of ribosomes during protein biosynthesis. The chain is Elongation factor Tu from Shewanella baltica (strain OS185).